A 931-amino-acid polypeptide reads, in one-letter code: Isoleucine--tRNA ligase (931 aa).

Residues 1 to 14 (MDYSKTLNLPQTQF) show a composition bias toward polar residues. The disordered stretch occupies residues 1-25 (MDYSKTLNLPQTQFPMRGNLPQREP). The short motif at 57 to 67 (PYANGHIHLGH) is the 'HIGH' region element. Glutamate 559 serves as a coordination point for L-isoleucyl-5'-AMP. Positions 600-604 (KMSKS) match the 'KMSKS' region motif. Lysine 603 serves as a coordination point for ATP. Positions 898, 901, 918, and 921 each coordinate Zn(2+).

This sequence belongs to the class-I aminoacyl-tRNA synthetase family. IleS type 1 subfamily. Monomer. Zn(2+) serves as cofactor.

The protein localises to the cytoplasm. It catalyses the reaction tRNA(Ile) + L-isoleucine + ATP = L-isoleucyl-tRNA(Ile) + AMP + diphosphate. In terms of biological role, catalyzes the attachment of isoleucine to tRNA(Ile). As IleRS can inadvertently accommodate and process structurally similar amino acids such as valine, to avoid such errors it has two additional distinct tRNA(Ile)-dependent editing activities. One activity is designated as 'pretransfer' editing and involves the hydrolysis of activated Val-AMP. The other activity is designated 'posttransfer' editing and involves deacylation of mischarged Val-tRNA(Ile). This is Isoleucine--tRNA ligase from Desulforamulus reducens (strain ATCC BAA-1160 / DSM 100696 / MI-1) (Desulfotomaculum reducens).